Reading from the N-terminus, the 410-residue chain is Peptidase T (410 aa).

H78 serves as a coordination point for Zn(2+). D80 is an active-site residue. Zn(2+) is bound at residue D140. Residue E173 is the Proton acceptor of the active site. E174, D196, and H379 together coordinate Zn(2+).

It belongs to the peptidase M20B family. The cofactor is Zn(2+).

It localises to the cytoplasm. It catalyses the reaction Release of the N-terminal residue from a tripeptide.. In terms of biological role, cleaves the N-terminal amino acid of tripeptides. The chain is Peptidase T from Pectobacterium atrosepticum (strain SCRI 1043 / ATCC BAA-672) (Erwinia carotovora subsp. atroseptica).